The primary structure comprises 692 residues: Centrosomal protein of 83 kDa (692 aa).

2 coiled-coil regions span residues 32–625 (RCEH…SLIL) and 656–689 (HLQE…ELGS). Residue S689 is modified to Phosphoserine.

Belongs to the CEP83 family. In terms of assembly, interacts with CEP164 and IFT20.

It localises to the cytoplasm. The protein resides in the cytoskeleton. The protein localises to the microtubule organizing center. Its subcellular location is the centrosome. It is found in the centriole. Component of the distal appendage region of the centriole involved in the initiation of primary cilium assembly. May collaborate with IFT20 in the trafficking of ciliary membrane proteins from the Golgi complex to the cilium during the initiation of primary cilium assembly. The chain is Centrosomal protein of 83 kDa (Cep83) from Mus musculus (Mouse).